Reading from the N-terminus, the 146-residue chain is Hemoglobin subunit beta (146 aa).

V1 is subject to N-acetylvaline. The region spanning 2-146 (HLTPEEKNAV…VANALAHKYH (145 aa)) is the Globin domain. A Phosphothreonine modification is found at T12. The residue at position 44 (S44) is a Phosphoserine. K59 carries the N6-acetyllysine modification. H63 provides a ligand contact to heme b. Position 82 is an N6-acetyllysine (K82). H92 serves as a coordination point for heme b. Residue C93 is modified to S-nitrosocysteine. N6-acetyllysine is present on K144.

It belongs to the globin family. Heterotetramer of two alpha chains and two beta chains. In terms of tissue distribution, red blood cells.

Its function is as follows. Involved in oxygen transport from the lung to the various peripheral tissues. The polypeptide is Hemoglobin subunit beta (HBB) (Theropithecus gelada (Gelada baboon)).